The sequence spans 391 residues: NADH-quinone oxidoreductase subunit D (391 aa).

The protein belongs to the complex I 49 kDa subunit family. NDH-1 is composed of 14 different subunits. Subunits NuoB, C, D, E, F, and G constitute the peripheral sector of the complex.

It localises to the cell inner membrane. It catalyses the reaction a quinone + NADH + 5 H(+)(in) = a quinol + NAD(+) + 4 H(+)(out). NDH-1 shuttles electrons from NADH, via FMN and iron-sulfur (Fe-S) centers, to quinones in the respiratory chain. The immediate electron acceptor for the enzyme in this species is believed to be ubiquinone. Couples the redox reaction to proton translocation (for every two electrons transferred, four hydrogen ions are translocated across the cytoplasmic membrane), and thus conserves the redox energy in a proton gradient. The sequence is that of NADH-quinone oxidoreductase subunit D from Rickettsia rickettsii (strain Iowa).